The chain runs to 823 residues: Degenerin-like protein asic-1 (823 aa).

Residues 1-38 (MGKNSLKRALELDVVDFAEHTSAHGIPRAYVSTGWRRY) are Cytoplasmic-facing. A helical membrane pass occupies residues 39–59 (MWLLCFLFCLSCFGHQAYLIV). The Extracellular portion of the chain corresponds to 60-767 (ERFNRNDIIV…FGGQLGLWMG (708 aa)). Cystine bridges form between Cys-86-Cys-518 and Cys-494-Cys-501. 5 N-linked (GlcNAc...) asparagine glycosylation sites follow: Asn-228, Asn-326, Asn-347, Asn-415, and Asn-486. 2 N-linked (GlcNAc...) asparagine glycosylation sites follow: Asn-527 and Asn-546. Cystine bridges form between Cys-604/Cys-687, Cys-625/Cys-683, Cys-629/Cys-681, and Cys-638/Cys-664. The short motif at 767 to 769 (GVS) is the GAS motif; ion selectivity filter element. Residues 768–788 (VSVITIGEVACFFFEVFISLI) traverse the membrane as a helical segment. Over 789 to 795 (SSNRTKR) the chain is Cytoplasmic.

Belongs to the amiloride-sensitive sodium channel (TC 1.A.6) family. As to quaternary structure, homotrimer. Heterotrimer; with other ASIC proteins producing channel with different properties.

The protein resides in the cell membrane. Its subcellular location is the postsynaptic cell membrane. It localises to the cell projection. The protein localises to the dendrite. It carries out the reaction Na(+)(in) = Na(+)(out). It catalyses the reaction K(+)(in) = K(+)(out). The enzyme catalyses Li(+)(in) = Li(+)(out). The catalysed reaction is Ca(2+)(in) = Ca(2+)(out). Its function is as follows. Forms voltage-independent, pH-gated trimeric sodium channels that act as postsynaptic excitatory receptors in the nervous system, playing a crucial role in regulating synaptic plasticity, learning, and memory. Promotes synaptic vesicle fusion to positively regulate the release of dopamine at dopaminergic neuron synapses. Displays high selectivity for sodium ions but can also permit the permeation of other cations. The sequence is that of Degenerin-like protein asic-1 from Caenorhabditis elegans.